The sequence spans 1022 residues: Polyamine-modulated factor 1-binding protein 1 (1022 aa).

Coiled-coil stretches lie at residues 89–121 (NKQY…LQAS), 169–281 (EKLH…ACSN), 312–377 (SEDC…LREE), 411–732 (LKKD…SAIQ), and 758–968 (QDDL…KAGN). Basic and acidic residues-rich tracts occupy residues 545–556 (QKESSKIEEERK) and 571–582 (EGQRRLSNAEKE). Residues 545-582 (QKESSKIEEERKHNRQRLQELSSELSEGQRRLSNAEKE) form a disordered region.

In terms of tissue distribution, expressed in the testis.

The protein resides in the cell projection. Its subcellular location is the cilium. The protein localises to the flagellum. In terms of biological role, required for normal spermatogenesis. It functions as a scaffold protein that attaches the sperm head-tail connecting piece to the nuclear envelope, thus maintaining sperm head and tail integrity. May also be involved in the general organization of cellular cytoskeleton. The sequence is that of Polyamine-modulated factor 1-binding protein 1 (Pmfbp1) from Mus musculus (Mouse).